A 352-amino-acid polypeptide reads, in one-letter code: UDP-3-O-acylglucosamine N-acyltransferase (352 aa).

Histidine 257 serves as the catalytic Proton acceptor.

The protein belongs to the transferase hexapeptide repeat family. LpxD subfamily. As to quaternary structure, homotrimer.

The catalysed reaction is a UDP-3-O-[(3R)-3-hydroxyacyl]-alpha-D-glucosamine + a (3R)-hydroxyacyl-[ACP] = a UDP-2-N,3-O-bis[(3R)-3-hydroxyacyl]-alpha-D-glucosamine + holo-[ACP] + H(+). It functions in the pathway bacterial outer membrane biogenesis; LPS lipid A biosynthesis. Functionally, catalyzes the N-acylation of UDP-3-O-acylglucosamine using 3-hydroxyacyl-ACP as the acyl donor. Is involved in the biosynthesis of lipid A, a phosphorylated glycolipid that anchors the lipopolysaccharide to the outer membrane of the cell. In Methylobacterium nodulans (strain LMG 21967 / CNCM I-2342 / ORS 2060), this protein is UDP-3-O-acylglucosamine N-acyltransferase.